The chain runs to 430 residues: Asparagine--tRNA ligase (430 aa).

This sequence belongs to the class-II aminoacyl-tRNA synthetase family.

It is found in the cytoplasm. It catalyses the reaction tRNA(Asn) + L-asparagine + ATP = L-asparaginyl-tRNA(Asn) + AMP + diphosphate + H(+). This chain is Asparagine--tRNA ligase, found in Thermococcus gammatolerans (strain DSM 15229 / JCM 11827 / EJ3).